Consider the following 264-residue polypeptide: Thymidylate synthase (264 aa).

DUMP is bound at residue Arg-21. A (6R)-5,10-methylene-5,6,7,8-tetrahydrofolate-binding site is contributed by His-51. DUMP is bound at residue 126–127 (RR). The Nucleophile role is filled by Cys-146. Residues 166-169 (RSAD), Asn-177, and 207-209 (HIY) contribute to the dUMP site. Residue Asp-169 participates in (6R)-5,10-methylene-5,6,7,8-tetrahydrofolate binding. Ala-263 is a (6R)-5,10-methylene-5,6,7,8-tetrahydrofolate binding site.

The protein belongs to the thymidylate synthase family. Bacterial-type ThyA subfamily. Homodimer.

The protein localises to the cytoplasm. It catalyses the reaction dUMP + (6R)-5,10-methylene-5,6,7,8-tetrahydrofolate = 7,8-dihydrofolate + dTMP. It functions in the pathway pyrimidine metabolism; dTTP biosynthesis. Catalyzes the reductive methylation of 2'-deoxyuridine-5'-monophosphate (dUMP) to 2'-deoxythymidine-5'-monophosphate (dTMP) while utilizing 5,10-methylenetetrahydrofolate (mTHF) as the methyl donor and reductant in the reaction, yielding dihydrofolate (DHF) as a by-product. This enzymatic reaction provides an intracellular de novo source of dTMP, an essential precursor for DNA biosynthesis. In Parabacteroides distasonis (strain ATCC 8503 / DSM 20701 / CIP 104284 / JCM 5825 / NCTC 11152), this protein is Thymidylate synthase.